Reading from the N-terminus, the 100-residue chain is EPLCRRQFQQHQHLRACQRYLRRRAQRGEQRGPALRLCCNQLRQVNKPCVCPVLRQAAHQQLYQGQIEGPRQVRRLFRAARNLPNICKIPAVGRCQFTRW.

Intrachain disulfides connect Cys4-Cys49, Cys17-Cys38, Cys39-Cys87, and Cys51-Cys95.

It belongs to the 2S seed storage albumins family. As to quaternary structure, heterodimer of a small A and a large B chain linked by disulfide bonds.

Its function is as follows. Heat stable 2S seed storage protein having sweetness-inducing activity. The protein is Sweet protein mabinlin-4 of Capparis masaikai (Mabinlang).